The sequence spans 35 residues: Thrombin-like enzyme cerastobin (35 aa).

Positions 1–35 (VIGGAKCNINEHRSIVLLYSSRLFGHTLINKEWVL) constitute a Peptidase S1 domain.

This sequence belongs to the peptidase S1 family. Snake venom subfamily. Monomer. Expressed by the venom gland.

Its subcellular location is the secreted. With respect to regulation, inhibited by diisopropylfluorophosphate (DFP). Its function is as follows. Thrombin-like snake venom serine protease, that cleaves both alpha-chain (FGA) and beta-chain (FGB) of fibrinogen. Partially degrades factor X (F10), and release bradykinin from kininogen (KNG). Potently induces platelet aggregation. Shows a proteolytic activity towards protein constituents of the platelets cytoskeleton. Hydrolyzes actin, actin-binding protein, and P235. Shows a preferential cleavage at Arg-|-Xaa bonds. The protein is Thrombin-like enzyme cerastobin of Cerastes vipera (Sahara sand viper).